We begin with the raw amino-acid sequence, 634 residues long: (-)-limonene synthase, chloroplastic (634 aa).

Residues Met1–Ser21 constitute a chloroplast transit peptide. Arg348, Asp385, Asp389, Arg526, and Gly529 together coordinate (2E)-geranyl diphosphate. Asp385 and Asp389 together coordinate Mg(2+). The short motif at Asp385–Asp389 is the DDXXD motif element. 2 residues coordinate Mg(2+): Gly529 and Asp537.

It belongs to the terpene synthase family. Tpsb subfamily. As to quaternary structure, monomer. It depends on Mg(2+) as a cofactor. Mn(2+) serves as cofactor.

The protein resides in the plastid. Its subcellular location is the chloroplast. The catalysed reaction is (2E)-geranyl diphosphate = (4S)-limonene + diphosphate. The protein operates within secondary metabolite biosynthesis; terpenoid biosynthesis. It participates in terpene metabolism; oleoresin biosynthesis. Functionally, monoterpene synthase (mono-TPS) involved in the biosynthesis of monoterpene natural products. Catalyzes the conversion of (2E)-geranyl diphosphate (GPP) into (-)-limonene. Not able to use geranylgeranyl pyrophosphate (GGPP) and farnesyl pyrophosphate (FPP) as substrates. In Picea sitchensis (Sitka spruce), this protein is (-)-limonene synthase, chloroplastic.